We begin with the raw amino-acid sequence, 506 residues long: Sugar transport protein 5 (506 aa).

Over 1 to 19 (MAGGGLALDVSSAGNIDAK) the chain is Cytoplasmic. Helical transmembrane passes span 20-40 (ITAAVVMSCIVAASCGLIFGY), 81-101 (LLTAFTSSLYVAGLVASLVAS), 117-137 (GFTFLFGALINGLAANIAMLI), 141-161 (ILLGFGVGFTNQAAPVYLSEV), 168-188 (GAFNIGFSCFISMGVVAANLI), 201-221 (ISLGLAAVPAAIMTVGCLFIS), 287-307 (LVVAVVIPCFQQLTGITVNAF), 325-345 (IATFILGFVNLGSLLLSTMVI), 352-372 (FLFIAGGILMLLCQIAVAVLL), 390-410 (VTVVVLLCIYAAGFGWSWGPL), 430-450 (LSVAVNFAATFALSQTFLATL), and 456-476 (GAFLFYGGWIFTMTIFVIMFL). The Cytoplasmic segment spans residues 477–506 (PETKGIPVDSMYQVWEKHWYWQRFTKPTST).

Belongs to the major facilitator superfamily. Sugar transporter (TC 2.A.1.1) family.

It localises to the membrane. Its function is as follows. Mediates an active uptake of hexoses, probably by sugar/hydrogen symport. The polypeptide is Sugar transport protein 5 (STP5) (Arabidopsis thaliana (Mouse-ear cress)).